A 200-amino-acid chain; its full sequence is Dephospho-CoA kinase (200 aa).

A DPCK domain is found at 3–200; that stretch reads RIGLTGGIGS…LIAEILTRIK (198 aa). Residue 11-16 coordinates ATP; that stretch reads GSGKST.

Belongs to the CoaE family.

The protein resides in the cytoplasm. The enzyme catalyses 3'-dephospho-CoA + ATP = ADP + CoA + H(+). It participates in cofactor biosynthesis; coenzyme A biosynthesis; CoA from (R)-pantothenate: step 5/5. Functionally, catalyzes the phosphorylation of the 3'-hydroxyl group of dephosphocoenzyme A to form coenzyme A. This is Dephospho-CoA kinase from Corynebacterium efficiens (strain DSM 44549 / YS-314 / AJ 12310 / JCM 11189 / NBRC 100395).